Consider the following 370-residue polypeptide: Erythronate-4-phosphate dehydrogenase (370 aa).

Residues serine 45 and threonine 66 each coordinate substrate. Residues aspartate 142 and threonine 169 each contribute to the NAD(+) site. Arginine 202 is an active-site residue. An NAD(+)-binding site is contributed by aspartate 228. Residue glutamate 233 is part of the active site. Histidine 250 serves as the catalytic Proton donor. Glycine 253 is an NAD(+) binding site. Tyrosine 254 lines the substrate pocket.

The protein belongs to the D-isomer specific 2-hydroxyacid dehydrogenase family. PdxB subfamily. In terms of assembly, homodimer.

It is found in the cytoplasm. It catalyses the reaction 4-phospho-D-erythronate + NAD(+) = (R)-3-hydroxy-2-oxo-4-phosphooxybutanoate + NADH + H(+). Its pathway is cofactor biosynthesis; pyridoxine 5'-phosphate biosynthesis; pyridoxine 5'-phosphate from D-erythrose 4-phosphate: step 2/5. Catalyzes the oxidation of erythronate-4-phosphate to 3-hydroxy-2-oxo-4-phosphonooxybutanoate. This is Erythronate-4-phosphate dehydrogenase from Teredinibacter turnerae (strain ATCC 39867 / T7901).